Consider the following 299-residue polypeptide: Probable phosphate butyryltransferase (299 aa).

It belongs to the phosphate acetyltransferase and butyryltransferase family.

It catalyses the reaction butanoyl-CoA + phosphate = butanoyl phosphate + CoA. In terms of biological role, catalyzes the conversion of butyryl-CoA through butyryl phosphate to butyrate. The polypeptide is Probable phosphate butyryltransferase (yqiS) (Bacillus subtilis (strain 168)).